Here is a 432-residue protein sequence, read N- to C-terminus: Adenosylhomocysteinase (432 aa).

An N-acetylserine modification is found at serine 2. The substrate site is built by threonine 57, aspartate 131, and glutamate 156. Phosphoserine is present on serine 183. The NAD binding stretch occupies residues 183-350 (SVTKSKFDNL…EGRLVNLGCA (168 aa)). Substrate is bound by residues lysine 186 and aspartate 190. At lysine 186 the chain carries N6-(2-hydroxyisobutyryl)lysine. Phosphotyrosine is present on tyrosine 193.

It belongs to the adenosylhomocysteinase family. Homotetramer. Interaction with AHCYL1. NAD(+) is required as a cofactor.

The protein resides in the cytoplasm. It is found in the melanosome. It localises to the nucleus. The protein localises to the endoplasmic reticulum. The enzyme catalyses S-adenosyl-L-homocysteine + H2O = L-homocysteine + adenosine. The protein operates within amino-acid biosynthesis; L-homocysteine biosynthesis; L-homocysteine from S-adenosyl-L-homocysteine: step 1/1. In terms of biological role, catalyzes the hydrolysis of S-adenosyl-L-homocysteine to form adenosine and homocysteine. Binds copper ions. The sequence is that of Adenosylhomocysteinase (AHCY) from Macaca fascicularis (Crab-eating macaque).